The sequence spans 369 residues: Anhydro-N-acetylmuramic acid kinase (369 aa).

12-19 (GTSMDGID) serves as a coordination point for ATP.

This sequence belongs to the anhydro-N-acetylmuramic acid kinase family.

It catalyses the reaction 1,6-anhydro-N-acetyl-beta-muramate + ATP + H2O = N-acetyl-D-muramate 6-phosphate + ADP + H(+). It participates in amino-sugar metabolism; 1,6-anhydro-N-acetylmuramate degradation. Its pathway is cell wall biogenesis; peptidoglycan recycling. Its function is as follows. Catalyzes the specific phosphorylation of 1,6-anhydro-N-acetylmuramic acid (anhMurNAc) with the simultaneous cleavage of the 1,6-anhydro ring, generating MurNAc-6-P. Is required for the utilization of anhMurNAc either imported from the medium or derived from its own cell wall murein, and thus plays a role in cell wall recycling. In Shewanella sediminis (strain HAW-EB3), this protein is Anhydro-N-acetylmuramic acid kinase.